Consider the following 658-residue polypeptide: Sodium/nucleoside cotransporter 1 (658 aa).

The Cytoplasmic portion of the chain corresponds to 1-75; that stretch reads MEKASGRKSL…ARTFCQRHAS (75 aa). Residues 76–99 traverse the membrane as a helical segment; the sequence is LFKKILLGLLCLAYAAYFLAACIL. Topologically, residues 100–104 are extracellular; that stretch reads DFQRA. A helical membrane pass occupies residues 105–123; the sequence is LALFVITCLVILVLLLHFL. Residues 124–142 lie on the Cytoplasmic side of the membrane; sequence KKFLGKKLTRCLKPFKNSQ. A helical transmembrane segment spans residues 143–162; sequence LRLWIKRVFAGVSLVGLILW. The Extracellular segment spans residues 163-173; sequence LALDTAQRPEQ. Residues 174–190 traverse the membrane as a helical segment; the sequence is LISFAGICMFVLILFAC. Residues 191–196 lie on the Cytoplasmic side of the membrane; the sequence is SKHHSA. Residues 197–217 traverse the membrane as a helical segment; the sequence is VSWRTVFWGLGLQFVFGLLVI. Residues 218–256 are Extracellular-facing; it reads RTDPGFIAFQWLGDQVQIFLAYTVAGSSFVLGDTLVNDV. A helical membrane pass occupies residues 257–278; that stretch reads FAFQSLPIIIFFGCVMSILYYL. Residues 279-289 are Cytoplasmic-facing; sequence GLVQWVVQKIA. The helical transmembrane segment at 290–313 threads the bilayer; the sequence is WFLQVTMRTTATETLAVAGNIFVG. Over 314 to 332 the chain is Extracellular; sequence MTEAPLLIRPYLADLTLSE. Residues 333-355 traverse the membrane as a helical segment; sequence IHAVMTSGFATISGTVLGAFISF. The Cytoplasmic segment spans residues 356-361; it reads GIDASS. A helical transmembrane segment spans residues 362–381; it reads LISASVMGAPCALALSKLVY. The Extracellular portion of the chain corresponds to 382-418; that stretch reads PEEEESKFKSKEGVKLPRGKESNVLEAASNGATDAIA. A helical membrane pass occupies residues 419-441; the sequence is LVANVAANLVAFLAVLAFINAAL. At 442-452 the chain is on the cytoplasmic side; the sequence is SWLGELVDIQG. A helical transmembrane segment spans residues 453 to 474; sequence LTFQVICSYILRPMVYMMGVEW. The Extracellular segment spans residues 475-529; that stretch reads TDCPMVAEMVGIKFFTNEFVAYQQLSQYKKKRLSGMEEWIDGQKQWISVRAEVIT. Residues 530-553 form a helical membrane-spanning segment; the sequence is TFSLCGFANLSSIGITLGGLTSMV. Over 554–564 the chain is Cytoplasmic; sequence PHRKSDLSKVV. The helical transmembrane segment at 565–587 threads the bilayer; it reads IRALFTGSCVSFISACVAGILYV. The Extracellular portion of the chain corresponds to 588–658; sequence PRGAETDCVS…CGFYNNTVCA (71 aa). Asn653 is a glycosylation site (N-linked (GlcNAc...) asparagine).

The protein belongs to the concentrative nucleoside transporter (CNT) (TC 2.A.41) family. In terms of processing, N-glycosylated. N-glycosylation is required for localization to the plasma membrane and the transporter activity.

The protein resides in the cell membrane. Its subcellular location is the apical cell membrane. The enzyme catalyses uridine(out) + Na(+)(out) = uridine(in) + Na(+)(in). It catalyses the reaction thymidine(out) + Na(+)(out) = thymidine(in) + Na(+)(in). The catalysed reaction is cytidine(out) + Na(+)(out) = cytidine(in) + Na(+)(in). It carries out the reaction adenosine(out) + Na(+)(out) = adenosine(in) + Na(+)(in). Its activity is regulated as follows. Due to its high apparent affinity but slow transport, adenosine could act as a negative regulator of pyrimidine transport under some conditions. Functionally, sodium and pyrimidine nucleoside symporter of the plasma membrane that imports uridine, thymidine and cytidine into cells by coupling their transport to the transmembrane sodium electrochemical gradient. Also transports adenosine, an atypical substrate transported with high apparent affinity, but low maximum velocity. Therefore, exhibits the transport characteristics of the nucleoside transport system cit or N2 subtype (N2/cit). Involved in renal nucleoside (re)absorption. The chain is Sodium/nucleoside cotransporter 1 (SLC28A1) from Oryctolagus cuniculus (Rabbit).